Reading from the N-terminus, the 379-residue chain is Glucose-1-phosphate adenylyltransferase (379 aa).

Residues glycine 164, 179–180 (EK), and serine 190 each bind alpha-D-glucose 1-phosphate.

Belongs to the bacterial/plant glucose-1-phosphate adenylyltransferase family. In terms of assembly, homotetramer.

The catalysed reaction is alpha-D-glucose 1-phosphate + ATP + H(+) = ADP-alpha-D-glucose + diphosphate. It participates in glycan biosynthesis; glycogen biosynthesis. Its function is as follows. Involved in the biosynthesis of ADP-glucose, a building block required for the elongation reactions to produce glycogen. Catalyzes the reaction between ATP and alpha-D-glucose 1-phosphate (G1P) to produce pyrophosphate and ADP-Glc. The sequence is that of Glucose-1-phosphate adenylyltransferase from Streptococcus equi subsp. zooepidemicus (strain H70).